The primary structure comprises 233 residues: Large ribosomal subunit protein uL1 (233 aa).

This sequence belongs to the universal ribosomal protein uL1 family. As to quaternary structure, part of the 50S ribosomal subunit.

Its function is as follows. Binds directly to 23S rRNA. The L1 stalk is quite mobile in the ribosome, and is involved in E site tRNA release. Functionally, protein L1 is also a translational repressor protein, it controls the translation of the L11 operon by binding to its mRNA. This is Large ribosomal subunit protein uL1 from Brucella anthropi (strain ATCC 49188 / DSM 6882 / CCUG 24695 / JCM 21032 / LMG 3331 / NBRC 15819 / NCTC 12168 / Alc 37) (Ochrobactrum anthropi).